We begin with the raw amino-acid sequence, 182 residues long: Small ribosomal subunit protein uS4c (182 aa).

The interval 12–31 (PGFTSKRPRSGSDLKNPLRS) is disordered. The region spanning 82–143 (MRLDNILFRL…KQRSKALIQN (62 aa)) is the S4 RNA-binding domain.

The protein belongs to the universal ribosomal protein uS4 family. Part of the 30S ribosomal subunit. Contacts protein S5. The interaction surface between S4 and S5 is involved in control of translational fidelity.

The protein resides in the plastid. It is found in the chloroplast. Functionally, one of the primary rRNA binding proteins, it binds directly to 16S rRNA where it nucleates assembly of the body of the 30S subunit. In terms of biological role, with S5 and S12 plays an important role in translational accuracy. In Hymenocallis littoralis (Beach spider-lily), this protein is Small ribosomal subunit protein uS4c (rps4).